Reading from the N-terminus, the 276-residue chain is Mitochondrial outer membrane protein porin of 36 kDa (276 aa).

The protein belongs to the eukaryotic mitochondrial porin (TC 1.B.8.1) family.

It is found in the mitochondrion outer membrane. Forms a channel through the cell membrane that allows diffusion of small hydrophilic molecules. The channel adopts an open conformation at low or zero membrane potential and a closed conformation at potentials above 30-40 mV. The open state has a weak anion selectivity whereas the closed state is cation-selective. This chain is Mitochondrial outer membrane protein porin of 36 kDa, found in Solanum tuberosum (Potato).